The sequence spans 220 residues: Ribosomal RNA small subunit methyltransferase Nep1 (220 aa).

Residues glycine 178, glycine 183, and isoleucine 196–leucine 201 each bind S-adenosyl-L-methionine.

This sequence belongs to the class IV-like SAM-binding methyltransferase superfamily. RNA methyltransferase NEP1 family. Homodimer.

The catalysed reaction is a pseudouridine in rRNA + S-adenosyl-L-methionine = an N(1)-methylpseudouridine in rRNA + S-adenosyl-L-homocysteine + H(+). Functionally, methyltransferase involved in ribosomal biogenesis. Specifically catalyzes the N1-methylation of the pseudouridine corresponding to position 914 in M.jannaschii 16S rRNA. The protein is Ribosomal RNA small subunit methyltransferase Nep1 of Thermococcus sibiricus (strain DSM 12597 / MM 739).